The chain runs to 572 residues: Proline--tRNA ligase (572 aa).

The protein belongs to the class-II aminoacyl-tRNA synthetase family. ProS type 1 subfamily. As to quaternary structure, homodimer.

It is found in the cytoplasm. It carries out the reaction tRNA(Pro) + L-proline + ATP = L-prolyl-tRNA(Pro) + AMP + diphosphate. Catalyzes the attachment of proline to tRNA(Pro) in a two-step reaction: proline is first activated by ATP to form Pro-AMP and then transferred to the acceptor end of tRNA(Pro). As ProRS can inadvertently accommodate and process non-cognate amino acids such as alanine and cysteine, to avoid such errors it has two additional distinct editing activities against alanine. One activity is designated as 'pretransfer' editing and involves the tRNA(Pro)-independent hydrolysis of activated Ala-AMP. The other activity is designated 'posttransfer' editing and involves deacylation of mischarged Ala-tRNA(Pro). The misacylated Cys-tRNA(Pro) is not edited by ProRS. The protein is Proline--tRNA ligase of Escherichia fergusonii (strain ATCC 35469 / DSM 13698 / CCUG 18766 / IAM 14443 / JCM 21226 / LMG 7866 / NBRC 102419 / NCTC 12128 / CDC 0568-73).